The sequence spans 177 residues: O-acetyl-ADP-ribose deacetylase (177 aa).

The region spanning 1-175 (MKTRIHVVQG…LYERLLTQQG (175 aa)) is the Macro domain. Residues 11-12 (DI), Asn25, 33-35 (GVD), and 122-126 (STGVY) each bind substrate. Asp35 (proton acceptor) is an active-site residue.

Belongs to the MacroD-type family. YmdB subfamily. In terms of assembly, homodimer. Interacts with RNase III.

The enzyme catalyses 3''-O-acetyl-ADP-D-ribose + H2O = ADP-D-ribose + acetate + H(+). It catalyses the reaction 2''-O-acetyl-ADP-D-ribose + H2O = ADP-D-ribose + acetate + H(+). In terms of biological role, deacetylates O-acetyl-ADP ribose to yield ADP-ribose and free acetate. Down-regulates ribonuclease 3 (RNase III) activity. Acts by interacting directly with the region of the ribonuclease that is required for dimerization/activation. This is O-acetyl-ADP-ribose deacetylase from Escherichia coli O157:H7.